Reading from the N-terminus, the 110-residue chain is UPF0060 membrane protein Veis_0342 (110 aa).

4 consecutive transmembrane segments (helical) span residues 8-28 (VLFT…WLVI), 33-53 (PLWL…LLTL), 63-83 (AAYG…VDGV), and 90-110 (VAGA…PASA).

The protein belongs to the UPF0060 family.

The protein resides in the cell inner membrane. This Verminephrobacter eiseniae (strain EF01-2) protein is UPF0060 membrane protein Veis_0342.